We begin with the raw amino-acid sequence, 429 residues long: Histidine--tRNA ligase (429 aa).

This sequence belongs to the class-II aminoacyl-tRNA synthetase family. As to quaternary structure, homodimer.

The protein resides in the cytoplasm. The enzyme catalyses tRNA(His) + L-histidine + ATP = L-histidyl-tRNA(His) + AMP + diphosphate + H(+). The chain is Histidine--tRNA ligase from Streptococcus pneumoniae (strain CGSP14).